The primary structure comprises 51 residues: Large ribosomal subunit protein eL39 (51 aa).

This sequence belongs to the eukaryotic ribosomal protein eL39 family.

The sequence is that of Large ribosomal subunit protein eL39 from Pyrobaculum islandicum (strain DSM 4184 / JCM 9189 / GEO3).